The following is a 575-amino-acid chain: Guanine nucleotide-binding protein-like 3-like protein (575 aa).

Residues 1 to 30 (MMKLRHKNKKPGKGSKGCKKPAKQNGKKAA) are compositionally biased toward basic residues. The segment at 1–75 (MMKLRHKNKK…AAREQERHRR (75 aa)) is disordered. The interval 9–28 (KKPGKGSKGCKKPAKQNGKK) is required for nucleolar localization. Over residues 42–72 (SNDHASREAELKKKRVGEMREKQQAAREQER) the composition is skewed to basic and acidic residues. Residues 51–79 (ELKKKRVGEMREKQQAAREQERHRRRTIE) are a coiled coil. One can recognise a CP-type G domain in the interval 118–303 (YKEFHKVVEY…LLDAPGIVPG (186 aa)). GTP is bound by residues 166–169 (NKID), 252–259 (GLPNVGKS), and 296–299 (DAPG). Lys470 participates in a covalent cross-link: Glycyl lysine isopeptide (Lys-Gly) (interchain with G-Cter in SUMO1).

It belongs to the TRAFAC class YlqF/YawG GTPase family. Interacts with MDM2; this interaction, which occurs in the nucleoplasm, stabilizes MDM2. Indirectly interacts with TP53, via MDM2-binding. Interacts with TERF1; this interaction probably occurs in the nucleoplasm and is increased during mitosis, when the nucleolus is disassembled. This binding may promote TERF1 homodimerization. Interacts with TERT.

The protein resides in the nucleus. The protein localises to the nucleolus. In terms of biological role, stabilizes TERF1 telomeric association by preventing TERF1 recruitment by PML. Stabilizes TERF1 protein by preventing its ubiquitination and hence proteasomal degradation. Does so by interfering with TERF1-binding to FBXO4 E3 ubiquitin-protein ligase. Required for cell proliferation. By stabilizing TRF1 protein during mitosis, promotes metaphase-to-anaphase transition. Stabilizes MDM2 protein by preventing its ubiquitination, and hence proteasomal degradation. By acting on MDM2, may affect TP53 activity. Required for normal processing of ribosomal pre-rRNA. Binds GTP. The polypeptide is Guanine nucleotide-binding protein-like 3-like protein (GNL3L) (Bos taurus (Bovine)).